The chain runs to 144 residues: Maximins 4/H3 type 2 (144 aa).

The N-terminal stretch at 1–18 is a signal peptide; sequence MNFKYIIAVSFFIASAYA. The propeptide occupies 19–43; it reads RRNEKDVQSLSQRDVLEEESLREIR. Asparagine amide is present on Asn-70. The propeptide occupies 74–123; the sequence is TAEDHEVMKRLEAVMRDLDSLDHPEEASERETRGFNQEEIANLFTKKEKR. Ile-143 is modified (isoleucine amide).

Belongs to the bombinin family. As to expression, expressed by the skin glands.

It localises to the secreted. Maximin-4 shows antibacterial activity against both Gram-positive and Gram-negative bacteria. It also shows antimicrobial activity against the fungus C.albicans, but not against A.flavus nor P.uticale. It has little hemolytic activity. It does not possess a significant cytotoxicity against tumor cell lines. It does not possess a significant anti-HIV activity. Functionally, maximin-H3 shows antibacterial activity against both Gram-positive and Gram-negative bacteria. It also shows antimicrobial activity against the fungus C.albicans. Shows strong hemolytic activity. This is Maximins 4/H3 type 2 from Bombina maxima (Giant fire-bellied toad).